A 145-amino-acid chain; its full sequence is D-aminoacyl-tRNA deacylase (145 aa).

The short motif at 137–138 (GP) is the Gly-cisPro motif, important for rejection of L-amino acids element.

The protein belongs to the DTD family. In terms of assembly, homodimer.

Its subcellular location is the cytoplasm. It catalyses the reaction glycyl-tRNA(Ala) + H2O = tRNA(Ala) + glycine + H(+). The catalysed reaction is a D-aminoacyl-tRNA + H2O = a tRNA + a D-alpha-amino acid + H(+). In terms of biological role, an aminoacyl-tRNA editing enzyme that deacylates mischarged D-aminoacyl-tRNAs. Also deacylates mischarged glycyl-tRNA(Ala), protecting cells against glycine mischarging by AlaRS. Acts via tRNA-based rather than protein-based catalysis; rejects L-amino acids rather than detecting D-amino acids in the active site. By recycling D-aminoacyl-tRNA to D-amino acids and free tRNA molecules, this enzyme counteracts the toxicity associated with the formation of D-aminoacyl-tRNA entities in vivo and helps enforce protein L-homochirality. This is D-aminoacyl-tRNA deacylase from Legionella pneumophila (strain Paris).